A 511-amino-acid polypeptide reads, in one-letter code: Histidine ammonia-lyase (511 aa).

Residues 142-144 (ASG) constitute a cross-link (5-imidazolinone (Ala-Gly)). Position 143 is a 2,3-didehydroalanine (Ser) (Ser143).

This sequence belongs to the PAL/histidase family. Contains an active site 4-methylidene-imidazol-5-one (MIO), which is formed autocatalytically by cyclization and dehydration of residues Ala-Ser-Gly.

It localises to the cytoplasm. The enzyme catalyses L-histidine = trans-urocanate + NH4(+). It functions in the pathway amino-acid degradation; L-histidine degradation into L-glutamate; N-formimidoyl-L-glutamate from L-histidine: step 1/3. The chain is Histidine ammonia-lyase from Brucella suis biovar 1 (strain 1330).